The primary structure comprises 531 residues: CTP synthase (531 aa).

An amidoligase domain region spans residues Met-1 to Leu-265. Ser-13 serves as a coordination point for CTP. UTP is bound at residue Ser-13. Ser-14–Ile-19 contributes to the ATP binding site. Residue Tyr-54 coordinates L-glutamine. Asp-71 lines the ATP pocket. Mg(2+)-binding residues include Asp-71 and Glu-139. CTP contacts are provided by residues Asp-146–Glu-148, Lys-186–Gln-191, and Lys-222. UTP is bound by residues Lys-186 to Gln-191 and Lys-222. Residues Asn-290–Lys-529 enclose the Glutamine amidotransferase type-1 domain. Residue Gly-349 coordinates L-glutamine. Cys-376 functions as the Nucleophile; for glutamine hydrolysis in the catalytic mechanism. L-glutamine contacts are provided by residues Leu-377 to Gln-380, Glu-400, and Arg-457. Catalysis depends on residues His-502 and Glu-504.

This sequence belongs to the CTP synthase family. As to quaternary structure, homotetramer.

It catalyses the reaction UTP + L-glutamine + ATP + H2O = CTP + L-glutamate + ADP + phosphate + 2 H(+). It carries out the reaction L-glutamine + H2O = L-glutamate + NH4(+). The catalysed reaction is UTP + NH4(+) + ATP = CTP + ADP + phosphate + 2 H(+). It functions in the pathway pyrimidine metabolism; CTP biosynthesis via de novo pathway; CTP from UDP: step 2/2. Its activity is regulated as follows. Allosterically activated by GTP, when glutamine is the substrate; GTP has no effect on the reaction when ammonia is the substrate. The allosteric effector GTP functions by stabilizing the protein conformation that binds the tetrahedral intermediate(s) formed during glutamine hydrolysis. Inhibited by the product CTP, via allosteric rather than competitive inhibition. In terms of biological role, catalyzes the ATP-dependent amination of UTP to CTP with either L-glutamine or ammonia as the source of nitrogen. Regulates intracellular CTP levels through interactions with the four ribonucleotide triphosphates. In Aquifex aeolicus (strain VF5), this protein is CTP synthase.